We begin with the raw amino-acid sequence, 485 residues long: Aspartyl protease family protein 2 (485 aa).

Residues 1–23 form the signal peptide; it reads MVGRRKALLFSLCFFFLSLPSFS. Residues 43–71 are disordered; sequence PVSFQPDSDSESLLESEFESGSDSESSSS. Residues 50–64 show a composition bias toward acidic residues; sequence SDSESLLESEFESGS. The Peptidase A1 domain maps to 142 to 480; it reads YFTRLGVGTP…DLASSRVGFA (339 aa). Active-site residues include aspartate 160 and aspartate 365.

It belongs to the peptidase A1 family.

Functionally, aspartyl protease. Not able to cleave BAG6. The protein is Aspartyl protease family protein 2 of Arabidopsis thaliana (Mouse-ear cress).